A 95-amino-acid chain; its full sequence is Aspartyl/glutamyl-tRNA(Asn/Gln) amidotransferase subunit C (95 aa).

This sequence belongs to the GatC family. Heterotrimer of A, B and C subunits.

The enzyme catalyses L-glutamyl-tRNA(Gln) + L-glutamine + ATP + H2O = L-glutaminyl-tRNA(Gln) + L-glutamate + ADP + phosphate + H(+). It carries out the reaction L-aspartyl-tRNA(Asn) + L-glutamine + ATP + H2O = L-asparaginyl-tRNA(Asn) + L-glutamate + ADP + phosphate + 2 H(+). Its function is as follows. Allows the formation of correctly charged Asn-tRNA(Asn) or Gln-tRNA(Gln) through the transamidation of misacylated Asp-tRNA(Asn) or Glu-tRNA(Gln) in organisms which lack either or both of asparaginyl-tRNA or glutaminyl-tRNA synthetases. The reaction takes place in the presence of glutamine and ATP through an activated phospho-Asp-tRNA(Asn) or phospho-Glu-tRNA(Gln). In Methylobacterium radiotolerans (strain ATCC 27329 / DSM 1819 / JCM 2831 / NBRC 15690 / NCIMB 10815 / 0-1), this protein is Aspartyl/glutamyl-tRNA(Asn/Gln) amidotransferase subunit C.